The following is a 92-amino-acid chain: Non-specific lipid-transfer protein B (92 aa).

Intrachain disulfides connect Cys-3–Cys-51, Cys-13–Cys-28, Cys-29–Cys-74, and Cys-49–Cys-88.

Belongs to the plant LTP family.

In terms of biological role, plant non-specific lipid-transfer proteins transfer phospholipids as well as galactolipids across membranes. May play a role in wax or cutin deposition in the cell walls of expanding epidermal cells and certain secretory tissues. This Ricinus communis (Castor bean) protein is Non-specific lipid-transfer protein B.